We begin with the raw amino-acid sequence, 105 residues long: DNA-binding transcriptional regulator BolA (105 aa).

The protein belongs to the BolA/IbaG family.

In terms of biological role, transcriptional regulator that plays an important role in general stress response. Has many effects on cell morphology, cell growth and cell division. Acts by regulating the transcription of many genes, including dacA (PBP-5), dacC (PBP-6), ampC and mreB. Probably involved in the coordination of genes that adapt the cell physiology in order to enhance cell adaptation and survival under stress conditions. Essential for normal cell morphology in stationary phase and under conditions of starvation. Also regulates a complex network of genes encoding proteins related to biofilm development, and negatively modulates flagellar biosynthesis and swimming capacity. Could be a motile/adhesive transcriptional switch, specifically involved in the transition between the planktonic and the attachment stage of biofilm formation. Overexpression produces round cell shape, impairs cell growth rate and induces biofilm development. This Escherichia coli (strain K12) protein is DNA-binding transcriptional regulator BolA.